A 210-amino-acid chain; its full sequence is Holliday junction resolvase RecU (210 aa).

The Mg(2+) site is built by Thr87, Asp89, Glu102, and Gln121.

It belongs to the RecU family. Requires Mg(2+) as cofactor.

It localises to the cytoplasm. It catalyses the reaction Endonucleolytic cleavage at a junction such as a reciprocal single-stranded crossover between two homologous DNA duplexes (Holliday junction).. Endonuclease that resolves Holliday junction intermediates in genetic recombination. Cleaves mobile four-strand junctions by introducing symmetrical nicks in paired strands. Promotes annealing of linear ssDNA with homologous dsDNA. Required for DNA repair, homologous recombination and chromosome segregation. In Lactobacillus delbrueckii subsp. bulgaricus (strain ATCC 11842 / DSM 20081 / BCRC 10696 / JCM 1002 / NBRC 13953 / NCIMB 11778 / NCTC 12712 / WDCM 00102 / Lb 14), this protein is Holliday junction resolvase RecU.